We begin with the raw amino-acid sequence, 310 residues long: Keratin, type II cytoskeletal 8 (310 aa).

A disordered region spans residues 1-38; sequence QRTLKVSSSGPRSFSSRSFSSGPSSRISSSSYSRVGSN. Lys5 is covalently cross-linked (Glycyl lysine isopeptide (Lys-Gly) (interchain with G-Cter in SUMO2)). 4 positions are modified to phosphoserine: Ser7, Ser9, Ser15, and Ser16. Residues 7 to 38 show a composition bias toward low complexity; the sequence is SSSGPRSFSSRSFSSGPSSRISSSSYSRVGSN. Omega-N-methylarginine is present on Arg17. Residues Ser18, Ser21, and Ser25 each carry the phosphoserine modification. Omega-N-methylarginine is present on Arg26. Residues Ser28, Ser31, and Ser33 each carry the phosphoserine modification. Residue Arg34 is modified to Omega-N-methylarginine. A Phosphoserine modification is found at Ser37. Arg42 carries the asymmetric dimethylarginine; alternate modification. Position 42 is an omega-N-methylarginine; alternate (Arg42). The coil 1A stretch occupies residues 92 to 127; the sequence is EKEQIKTLNNKFASFIDKVRFLEQQNKILETKWSFL. The region spanning 92 to 310 is the IF rod domain; that stretch reads EKEQIKTLNN…LRHTKTEISE (219 aa). Lys102 carries the N6-malonyllysine modification. Glycyl lysine isopeptide (Lys-Gly) (interchain with G-Cter in SUMO2) cross-links involve residues Lys123 and Lys131. The linker 1 stretch occupies residues 128–144; sequence QQQKTSQSNLDGLFEKY. Positions 145 to 236 are coil 1B; the sequence is ITNLRRQLDS…HLYEEEIKEM (92 aa). Residue Lys198 forms a Glycyl lysine isopeptide (Lys-Gly) (interchain with G-Cter in SUMO1); alternate linkage. Lys198 participates in a covalent cross-link: Glycyl lysine isopeptide (Lys-Gly) (interchain with G-Cter in SUMO2); alternate. Lys208 carries the N6-acetyllysine modification. The residue at position 229 (Tyr229) is a Phosphotyrosine. The linker 12 stretch occupies residues 237–260; the sequence is QSQISDTSVVVSMDNSRSLDLDGI. Phosphoserine occurs at positions 254 and 275. A coil 2 region spans residues 261-310; that stretch reads IADVRAQYEEIANRSRAEAETMYQIKYEELQLLAGKHGDDLRHTKTEISE. Lys286 participates in a covalent cross-link: Glycyl lysine isopeptide (Lys-Gly) (interchain with G-Cter in SUMO2). A Glycyl lysine isopeptide (Lys-Gly) (interchain with G-Cter in SUMO2); alternate cross-link involves residue Lys296. An N6-acetyllysine; alternate modification is found at Lys296. A Glycyl lysine isopeptide (Lys-Gly) (interchain with G-Cter in SUMO2) cross-link involves residue Lys305.

It belongs to the intermediate filament family. As to quaternary structure, heterotetramer of two type I and two type II keratins. Forms a heterodimer with KRT18. Associates with KRT20. Interacts with PNN. When associated with KRT19, interacts with DMD. Interacts with APEX1. Interacts with GPER1. Interacts with EPPK1. Interacts with PKP1 and PKP2. O-glycosylated. O-GlcNAcylation at multiple sites increases solubility, and decreases stability by inducing proteasomal degradation. In terms of processing, O-glycosylated (O-GlcNAcylated), in a cell cycle-dependent manner.

The protein resides in the cytoplasm. It localises to the nucleus. The protein localises to the nucleoplasm. Its subcellular location is the nucleus matrix. In terms of biological role, together with KRT19, helps to link the contractile apparatus to dystrophin at the costameres of striated muscle. In Potorous tridactylus (Potoroo), this protein is Keratin, type II cytoskeletal 8.